The sequence spans 208 residues: Phosphoheptose isomerase (208 aa).

One can recognise an SIS domain in the interval 38-200; sequence MAVTLAKGHK…LFENVLALQP (163 aa). 53-55 is a substrate binding site; it reads NGG. Positions 62 and 66 each coordinate Zn(2+). Residues Glu66, 95-96, 121-123, Ser126, and Gln173 each bind substrate; these read ND and STS. 2 residues coordinate Zn(2+): Gln173 and His181.

Belongs to the SIS family. GmhA subfamily. Homotetramer. Requires Zn(2+) as cofactor.

The protein localises to the cytoplasm. It carries out the reaction 2 D-sedoheptulose 7-phosphate = D-glycero-alpha-D-manno-heptose 7-phosphate + D-glycero-beta-D-manno-heptose 7-phosphate. It participates in carbohydrate biosynthesis; D-glycero-D-manno-heptose 7-phosphate biosynthesis; D-glycero-alpha-D-manno-heptose 7-phosphate and D-glycero-beta-D-manno-heptose 7-phosphate from sedoheptulose 7-phosphate: step 1/1. Functionally, catalyzes the isomerization of sedoheptulose 7-phosphate in D-glycero-D-manno-heptose 7-phosphate. The sequence is that of Phosphoheptose isomerase from Nitratidesulfovibrio vulgaris (strain ATCC 29579 / DSM 644 / CCUG 34227 / NCIMB 8303 / VKM B-1760 / Hildenborough) (Desulfovibrio vulgaris).